A 2471-amino-acid chain; its full sequence is MSMNFFNSSEPARDHKPDQEKETVMTTEHYEFERPDVKAIRNFKFFRSDETETKKGPNLHISDLSPLESQSVPPSALSLNHSIIPDQYERRQDTPDPIHTPEISLSDYLYDQTLSPQGFDNSRENFNIHKTIASLFEDNSSVVSQESTDDTKTTLSSETCDSFSLNNASYLTNINFVQNHLQYLSQNVLGNRTSNSLPPSSSSQIDFDASNLTPDSIPGYILNKKLGSVHQSTDSVYNAIKIPQNEEYNCCTKASASQNPTNLNSKVIVRLSPNIFQNLSLSRFLNEWYILSGKHSSKEHQIWSNESLTNEYVQDKTIPTFDKESARFRPTLPINIPGILYPQEIINFCVNSHDYPLEHPSQSTDQKRFAMVYQDNDYKTFKELSMFTLHELQTRQGSYSSNESRRKSSSGFNIGVNATTTEAGSLESFSNLMQNHHLGATSTNGDPFHSKLAKFEYGVSKSPMKLIEILTDIMRVVETISVIHELGFVHNGLTSSNLLKSEKNVRDIKITGWGFAFSFTENCSQGYRNKHLAQVQDLIPYMAPEVLAITNSVVDYRSDFYSLGVIMYELVLGILPFKNSNPQKLIRMHTFENPIAPSALAPGWISEKLSGVIMKLLEKHPHNRYTDCHSLLHDLIEVKNMYISKLLDSGETIPNSNLNLSDRQYYLTKENLLHPEKMGITPVLGLKESFIGRRDFLQNVTEVYNNSKNGIDLLFISGESGRGKTIILQDLRAAAVLKQDFYYSWKFSFFGADTHVYRFLVEGVQKIITQILNSSEEIQNTWRDVILTHIPIDLSILFYLIPELKVLLGKKYTSIYKHKIGMGMLKRSFKEDQTSRLEIKLRQILKEFFKLVAKQGLSIFLDDVQWCSEESWRLLCDVLDFDSSGEVRESYNIKIVVCYALNADHLENVNIEHKKISFCRYAKQSHLNLREFSIPHIPLEDAIEFLCEPYTRSHDHECNSKKSDVIANLNCTNEYPQNTCKVIPSIIQELYQSSEGNVLLLIFLTRMTKLSGKVPFQRFSVKNSYLYDHLSNSNYGTTRKEILTNYLNMGTNSDTRALLKVAALISNGSGFFFSDLIVATDLPMAEAFQLLQICIHSRIIVPTSTYYKIPMDLIASDQTPFDLTDDNIWKLATLCSYKFYHDSICTHIIKELNASGEFKELSRLCGLRFYNTITKERLLNIGGYLQMATHFRNSYEVAGPEENEKYVEVLVQAGRYAISTYNMKLSQWFFNVVGELVYNLDSKTQLKSVLTIAENHFNSREFEQCLSVVENAQRKFGFDRLIFSIQIVRCKIELGDYDEAHRIAIECLKELGVPLDDDDEYTSENSLETCLGKIPLSVADIRGILKIKRCKNSRTLLMYQLISELIVLFKLQGKDKVRRFLTAYAMSQIHTQGSSPYCAVILIDFAQSFVNETTTSGMLKAKELSIVMLSLINRAPEISLSYVQSIYEYYFSCHAVFFESIEKMSDLIHPGNASSHCTRSSYYSSFHLIVNVSKIFFSCMNGESFKMFSTFKCKSYLTGDPQMPEMDNFLYDSEMLLAGHSELNEFMRKYQSFNQTSVGKFCYYLIVLLVMSREHRFDEAADLVLKVLEDLSEKLPVSFLHHQYYLICGKVFAYHQTKTPESEEQVERILARQFERYELWASTNKPTLLPRYLLLSTYKQIRENHVDKLEILDSFEEALQTAHKFHNVYDMCWINLECARWLISINQKRHRISRMVKQGLKILRSLELNNHLRLAEFEFDEYIEDEDHRNKWAGLTNNPTLDTVTTWQQQNMPDKVSPCNDKQLVHGKQFGKKEFDSHLLRLHFDGQYTGLDLNSAIRECLAISEALDENSILTKLMASAIKYSGATYGVIVTKKNQETPFLRTIGSQHNIHTLNNMPISDDICPAQLIRHVLHTGETVNKAHDHIGFANKFENEYFQTTDKKYSVVCLPLKSSLGLFGALYLEGSDGDFGHEDLFNERKCDLLQLFCTQAAVALGKERLLLQMELAKMAAEDATDEKASFLANMSHEIRTPFNSLLSFAIFLLDTKLDSTQREYVEAIQSSAMITLNIIDGILAFSKIEHGSFTLENAPFSLNDCIETAIQVSGETILNDQIELVFCNNCPEIEFVVGDLTRFRQIVINLVGNAIKFTTKGHVLISCDSRKITDDRFEINVSVEDSGIGISKKSQNKVFGAFSQVDGSARREYGGSGLGLAISKKLTELMGGTIRFESEEGIGTTFYVSVIMDAKEYSSPPFSLNKKCLIYSQHCLTAKSISNMLNYFGSTVKVTNQKSEFSTSVQANDIIFVDRGMEPDVSCKTKVIPIDPKPFKRNKLISILKEQPSLPTKVFGNNKSNLSKQYPLRILLAEDNLLNYKVCLKHLDKLGYKADHAKDGVVVLDKCKELLEKDEKYDVILMDIQMPRKDGITATRDLKTLFHTQKKESWLPVIVALTANVAGDDKKRCLEEGMFDFITKPILPDELRRILTKVGETVNM.

Positions Met-1–Glu-10 are enriched in polar residues. Disordered regions lie at residues Met-1–Tyr-30, Glu-52–Ser-75, and Arg-395–Gly-415. Basic and acidic residues predominate over residues Pro-11–Tyr-30. Residues Glu-358–Ile-636 form the Protein kinase domain. Positions Asn-2004–Ala-2225 constitute a Histidine kinase domain. Phosphohistidine; by autocatalysis is present on His-2007. The Response regulatory domain occupies Arg-2340–Gly-2466. A 4-aspartylphosphate modification is found at Asp-2394.

The phosphorelay mechanism involves the sequential transfer of a phosphate group from His-2007 (H1) in the histidine kinase domain (transmitter domain) to Asp-2394 (D1) of the response regulatory domain (receiver domain). This transfer probably occurs between two CHK1 molecules, rather than intramolecularly.

The catalysed reaction is ATP + protein L-histidine = ADP + protein N-phospho-L-histidine.. Histidine kinase involved in a two-component signaling pathway that regulates cell wall mannan and glucan biosynthesis. Regulates quorum sensing as well as hyphal formation, biofilm formation, chlamidospore formation, and virulence. Plays a prominent role in phagocyte activation. Involved in the covering of the most potent pro-inflammatory cell wall molecules, the beta-glucans, underneath a dense mannan layer, so that the pathogen becomes partly invisible for immune cells such as phagocytes. This Candida albicans (strain SC5314 / ATCC MYA-2876) (Yeast) protein is Histidine protein kinase 1 (CHK1).